A 296-amino-acid chain; its full sequence is MSDYLVKSIDKTKNLRLLTITAKDVVGEAQKRHDLWSASAAVLGRTLVGSLLLAGAELTDKEELTVRLLGNGPVGPTIVTAMSDLKVKGYVKNPHIALSPKKNGHIDVKKAVGQGMLEVTKDLGLKEPYTGQVPIVSGEIAEDFAYYLTKSEQIPSAVGLSVFVNPNNSIGEAGGFMLQALPGASDALITETIKRIKALPALSTEFLDGMTPEDLARKILGTDCKILEKDDVAFSCDCSKEKYAGILETLKSSQLKAMINEDHGAELTCNFCGNKYHYTENELKDILAKKKEEKDY.

2 disulfides stabilise this stretch: cysteine 236/cysteine 238 and cysteine 269/cysteine 272.

This sequence belongs to the HSP33 family. In terms of processing, under oxidizing conditions two disulfide bonds are formed involving the reactive cysteines. Under reducing conditions zinc is bound to the reactive cysteines and the protein is inactive.

The protein resides in the cytoplasm. Functionally, redox regulated molecular chaperone. Protects both thermally unfolding and oxidatively damaged proteins from irreversible aggregation. Plays an important role in the bacterial defense system toward oxidative stress. The chain is 33 kDa chaperonin from Lactobacillus helveticus (strain DPC 4571).